Reading from the N-terminus, the 590-residue chain is Cytidine monophosphate-N-acetylneuraminic acid hydroxylase (590 aa).

One can recognise a Rieske domain in the interval 14–112; sequence LSPVEVASLK…VEMDENNRLL (99 aa). The [2Fe-2S] cluster site is built by Cys54, His56, Cys75, and His78.

It belongs to the CMP-Neu5Ac hydroxylase family. [2Fe-2S] cluster serves as cofactor.

The protein localises to the cytoplasm. It catalyses the reaction CMP-N-acetyl-beta-neuraminate + 2 Fe(II)-[cytochrome b5] + O2 + 2 H(+) = CMP-N-glycoloyl-beta-neuraminate + 2 Fe(III)-[cytochrome b5] + H2O. It participates in amino-sugar metabolism; N-acetylneuraminate metabolism. Sialic acids are components of carbohydrate chains of glycoconjugates and are involved in cell-cell recognition and cell-pathogen interactions. Catalyzes the conversion of CMP-N-acetylneuraminic acid (CMP-Neu5Ac) into its hydroxylated derivative CMP-N-glycolylneuraminic acid (CMP-Neu5Gc), a sialic acid abundantly expressed at the surface of many cells. This Pan troglodytes (Chimpanzee) protein is Cytidine monophosphate-N-acetylneuraminic acid hydroxylase.